The sequence spans 1330 residues: Nephrocystin-3 (1330 aa).

Residue Gly2 is the site of N-myristoyl glycine attachment. Residues 83 to 207 (ELEYAAAEYE…QRLQAQGIQV (125 aa)) are a coiled coil. TPR repeat units lie at residues 471–504 (IPEE…AHEL), 885–918 (CLLN…KSAM), 920–942 (TEYF…MSCL), 943–976 (ADLY…RETA), 985–1018 (AQSL…SENA), 1027–1060 (AREL…HQKA), 1093–1126 (ARTL…RERV), 1135–1168 (AQSL…RRRA), 1177–1210 (AYTV…RQKS), 1219–1252 (ATAL…YEDS), and 1261–1294 (GETL…KEAE). The interval 1296 to 1330 (SLLGGKAPSRHSSSGDTFSLKTAHSPNVFLQQGQR) is disordered. Positions 1305 to 1330 (RHSSSGDTFSLKTAHSPNVFLQQGQR) are enriched in polar residues.

Interacts with NPHP1 and INVS/NPHP2. Interacts (when myristoylated) with UNC119 and UNC119B; interaction is required for localization to cilium. Interacts with CEP164. Component of a complex containing at least ANKS6, INVS, NEK8 and NPHP3. ANKS6 may organize complex assembly by linking INVS and NPHP3 to NEK8 and INVS may target the complex to the proximal ciliary axoneme. Widely expressed at low level. Expressed in heart, placenta, liver, skeletal muscle, kidney and pancreas. Expressed at very low level in brain and lung.

It is found in the cell projection. The protein localises to the cilium. Functionally, required for normal ciliary development and function. Inhibits disheveled-1-induced canonical Wnt-signaling activity and may also play a role in the control of non-canonical Wnt signaling which regulates planar cell polarity. Probably acts as a molecular switch between different Wnt signaling pathways. Required for proper convergent extension cell movements. The chain is Nephrocystin-3 (NPHP3) from Homo sapiens (Human).